The following is a 413-amino-acid chain: Autophagy-related protein 18 (413 aa).

5 WD repeats span residues 1-36, 69-114, 141-182, 185-225, and 230-269; these read MAMNFVTFNQDYSYLAVATAKGFRIFTTDPFAKSYE, KRQS…LLYT, PHKA…AINV, AHRS…KLYQ, and SIPSRIYSMSFNTTSTLLCVSSSTETIHLFKLSQGQSSES. Positions 226–230 match the L/FRRG motif motif; the sequence is FRRGS. The span at 263–289 shows a compositional bias: low complexity; it reads QGQSSESSLPSPSAPQRSMSQSSLSNS. The interval 263–315 is disordered; that stretch reads QGQSSESSLPSPSAPQRSMSQSSLSNSPDEDETSGDKDSSEFHSRKHNGTLMG. The segment covering 296–305 has biased composition (basic and acidic residues); it reads SGDKDSSEFH. WD repeat units follow at residues 308 to 354 and 366 to 406; these read KHNG…AWIK and GNTG…GGEG.

Belongs to the WD repeat PROPPIN family. Component of the PI(3,5)P2 regulatory complex.

The protein localises to the preautophagosomal structure membrane. Its subcellular location is the vacuole membrane. It localises to the endosome membrane. In terms of biological role, the PI(3,5)P2 regulatory complex regulates both the synthesis and turnover of phosphatidylinositol 3,5-bisphosphate (PtdIns(3,5)P2). Necessary for proper vacuole morphology. Plays an important role in osmotically-induced vacuole fragmentation. Required for cytoplasm to vacuole transport (Cvt) vesicle formation, pexophagy and starvation-induced autophagy. Involved in correct atg9 trafficking to the pre-autophagosomal structure. Might also be involved in premeiotic DNA replication. This chain is Autophagy-related protein 18 (atg18), found in Aspergillus oryzae (strain ATCC 42149 / RIB 40) (Yellow koji mold).